A 146-amino-acid chain; its full sequence is Snaclec coagulation factor X-activating enzyme light chain 1 (146 aa).

The N-terminal stretch at Met-1 to Ala-23 is a signal peptide. A disulfide bridge links Cys-27 with Cys-38. The C-type lectin domain occupies Tyr-34 to Lys-145. Asn-47 carries N-linked (GlcNAc...) (complex) asparagine glycosylation. Cystine bridges form between Cys-55-Cys-144 and Cys-121-Cys-136.

Belongs to the snaclec family. Heterotrimer; disulfide-linked. The heterotrimer consists of 1 heavy chain (a metalloproteinase) and 2 light chains: LC1 and LC2. In terms of processing, N-glycosylated; probably required for conformation. Removal of easily accessible sugars does not change its functional capacity, but removal of the core sugars with N-glycanase causes a virtually complete loss of enzyme activity, apparently as a result of major conformational changes in the molecule. Not O-glycosylated. In terms of tissue distribution, expressed by the venom gland.

The protein resides in the secreted. Functionally, regulatory subunit of the blood coagulation factor X- and IX-activating enzyme. The enzyme activates coagulation factor X (F10) by cleaving the Arg-Ile bond and is also able to activate coagulation factor IX (F9) and protein S (PROS1) by specific cleavage of Arg-Ile and Arg-Val bonds. May serve as an exosite by which the enzyme recognizes and binds to the Gla domain of factor X (F10) and factor IX (F9) in a calcium-dependent manner. The polypeptide is Snaclec coagulation factor X-activating enzyme light chain 1 (LC1) (Daboia siamensis (Eastern Russel's viper)).